Consider the following 183-residue polypeptide: uncharacterized protein (183 aa).

This sequence to A.muscaria DOPA 4,5-dioxygenase.

This is an uncharacterized protein from Botryotinia fuckeliana (Noble rot fungus).